The following is an 876-amino-acid chain: Alanine--tRNA ligase (876 aa).

His565, His569, Cys667, and His671 together coordinate Zn(2+).

It belongs to the class-II aminoacyl-tRNA synthetase family. Zn(2+) serves as cofactor.

It is found in the cytoplasm. It carries out the reaction tRNA(Ala) + L-alanine + ATP = L-alanyl-tRNA(Ala) + AMP + diphosphate. In terms of biological role, catalyzes the attachment of alanine to tRNA(Ala) in a two-step reaction: alanine is first activated by ATP to form Ala-AMP and then transferred to the acceptor end of tRNA(Ala). Also edits incorrectly charged Ser-tRNA(Ala) and Gly-tRNA(Ala) via its editing domain. This Staphylococcus aureus (strain MRSA252) protein is Alanine--tRNA ligase.